Here is a 94-residue protein sequence, read N- to C-terminus: Large ribosomal subunit protein bL25 (94 aa).

The protein belongs to the bacterial ribosomal protein bL25 family. As to quaternary structure, part of the 50S ribosomal subunit; part of the 5S rRNA/L5/L18/L25 subcomplex. Contacts the 5S rRNA. Binds to the 5S rRNA independently of L5 and L18.

Its function is as follows. This is one of the proteins that binds to the 5S RNA in the ribosome where it forms part of the central protuberance. This chain is Large ribosomal subunit protein bL25, found in Edwardsiella ictaluri (strain 93-146).